A 414-amino-acid chain; its full sequence is Isocitrate dehydrogenase [NADP] cytoplasmic (414 aa).

An N-acetylserine modification is found at serine 2. Phosphotyrosine is present on tyrosine 42. 75-77 is a binding site for NADP(+); that stretch reads TIT. Threonine 77 contacts substrate. An N6-acetyllysine modification is found at lysine 81. Arginine 82 provides a ligand contact to NADP(+). Substrate contacts are provided by residues 94–100 and arginine 109; that span reads SPNGTIR. Lysine 126 is subject to N6-succinyllysine. 2 residues coordinate substrate: arginine 132 and lysine 212. N6-acetyllysine is present on residues lysine 224, lysine 233, and lysine 243. A Mn(2+)-binding site is contributed by aspartate 252. Lysine 260 is a binding site for NADP(+). Residues aspartate 275 and aspartate 279 each contribute to the Mn(2+) site. Residue 310-315 participates in NADP(+) binding; it reads GTVTRH. At lysine 321 the chain carries N6-acetyllysine. NADP(+) is bound at residue asparagine 328. The residue at position 389 (serine 389) is a Phosphoserine. The residue at position 400 (lysine 400) is an N6-succinyllysine.

It belongs to the isocitrate and isopropylmalate dehydrogenases family. Homodimer. Mg(2+) is required as a cofactor. Mn(2+) serves as cofactor. In terms of processing, acetylation at Lys-374 dramatically reduces catalytic activity.

It is found in the cytoplasm. The protein resides in the cytosol. The enzyme catalyses D-threo-isocitrate + NADP(+) = 2-oxoglutarate + CO2 + NADPH. Functionally, catalyzes the NADP(+)-dependent oxidative decarboxylation of isocitrate (D-threo-isocitrate) to 2-ketoglutarate (2-oxoglutarate), which is required by other enzymes such as the phytanoyl-CoA dioxygenase. Plays a critical role in the generation of NADPH, an important cofactor in many biosynthesis pathways. May act as a corneal epithelial crystallin and may be involved in maintaining corneal epithelial transparency. In Microtus ochrogaster (Prairie vole), this protein is Isocitrate dehydrogenase [NADP] cytoplasmic (IDH1).